The following is a 118-amino-acid chain: Large ribosomal subunit protein bL19 (118 aa).

This sequence belongs to the bacterial ribosomal protein bL19 family.

In terms of biological role, this protein is located at the 30S-50S ribosomal subunit interface and may play a role in the structure and function of the aminoacyl-tRNA binding site. The chain is Large ribosomal subunit protein bL19 from Nautilia profundicola (strain ATCC BAA-1463 / DSM 18972 / AmH).